Consider the following 64-residue polypeptide: Conotoxin mr5.3 (64 aa).

The signal sequence occupies residues 1-19; that stretch reads MRCVPVFVILLLLIASVPS. A propeptide spanning residues 20–48 is cleaved from the precursor; that stretch reads VDAQLKTKDDMPLASSHANVKRTLQILRN. 4-carboxyglutamate occurs at positions 56 and 60.

In terms of processing, contains 2 disulfide bonds that can be either 'C1-C3, C2-C4' or 'C1-C4, C2-C3', since these disulfide connectivities have been observed for conotoxins with cysteine framework V (for examples, see AC P0DQQ7 and AC P81755). As to expression, expressed by the venom duct.

It is found in the secreted. The polypeptide is Conotoxin mr5.3 (Conus marmoreus (Marble cone)).